Consider the following 447-residue polypeptide: Trigger factor (447 aa).

In terms of domain architecture, PPIase FKBP-type spans 188 to 273 (GDKLVIDFEG…VNDIQVAEDF (86 aa)).

This sequence belongs to the FKBP-type PPIase family. Tig subfamily.

It localises to the cytoplasm. It carries out the reaction [protein]-peptidylproline (omega=180) = [protein]-peptidylproline (omega=0). Involved in protein export. Acts as a chaperone by maintaining the newly synthesized protein in an open conformation. Functions as a peptidyl-prolyl cis-trans isomerase. This chain is Trigger factor, found in Wolbachia sp. subsp. Brugia malayi (strain TRS).